The chain runs to 348 residues: NADH-ubiquinone oxidoreductase chain 2 (348 aa).

11 consecutive transmembrane segments (helical) span residues 3–23 (PVVL…TFIG), 25–45 (HWLL…PLMI), 67–87 (SALL…WSLL), 95–115 (ATLV…HFWL), 118–138 (VLQG…KLAP), 149–171 (LNSN…GGLN), 178–198 (ILAY…HYSP), 203–223 (LNLA…KLFN), 240–260 (LSII…LSGF), 274–294 (DLAI…FFYL), and 324–344 (LILM…PTIF).

This sequence belongs to the complex I subunit 2 family.

The protein resides in the mitochondrion inner membrane. The catalysed reaction is a ubiquinone + NADH + 5 H(+)(in) = a ubiquinol + NAD(+) + 4 H(+)(out). Core subunit of the mitochondrial membrane respiratory chain NADH dehydrogenase (Complex I) that is believed to belong to the minimal assembly required for catalysis. Complex I functions in the transfer of electrons from NADH to the respiratory chain. The immediate electron acceptor for the enzyme is believed to be ubiquinone. This Squalus acanthias (Spiny dogfish) protein is NADH-ubiquinone oxidoreductase chain 2 (MT-ND2).